A 1106-amino-acid polypeptide reads, in one-letter code: Carbamoyl phosphate synthase large chain (1106 aa).

Residues 1 to 402 are carboxyphosphate synthetic domain; the sequence is MPRRQDLNSV…ALQKAMRSLE (402 aa). The ATP site is built by Arg129, Arg169, Gly175, Gly176, Glu208, Ile210, Glu215, Gly241, Val242, His243, Gln285, and Glu299. Residues 133-328 form the ATP-grasp 1 domain; it reads KGVVERCGAE…IAKIATKLSL (196 aa). Mg(2+)-binding residues include Gln285, Glu299, and Asn301. The Mn(2+) site is built by Gln285, Glu299, and Asn301. Residues 403 to 550 form an oligomerization domain region; the sequence is QKGSAFSFAR…YHYSSYDRET (148 aa). Positions 551–953 are carbamoyl phosphate synthetic domain; the sequence is EVAPHEKPSV…AFAKAQAAAG (403 aa). Residues 681–872 form the ATP-grasp 2 domain; it reads ARVLTEAGLR…MAKAAALIGT (192 aa). ATP contacts are provided by Arg717, Lys756, Leu758, Glu763, Gly788, Ile789, His790, Ser791, Gln831, and Glu843. Mg(2+) contacts are provided by Gln831, Glu843, and Asn845. Gln831, Glu843, and Asn845 together coordinate Mn(2+). An MGS-like domain is found at 954 to 1106; it reads GPLPTSGSLF…ERAAQEASRD (153 aa). Positions 954–1106 are allosteric domain; the sequence is GPLPTSGSLF…ERAAQEASRD (153 aa).

It belongs to the CarB family. In terms of assembly, composed of two chains; the small (or glutamine) chain promotes the hydrolysis of glutamine to ammonia, which is used by the large (or ammonia) chain to synthesize carbamoyl phosphate. Tetramer of heterodimers (alpha,beta)4. Mg(2+) serves as cofactor. Mn(2+) is required as a cofactor.

The enzyme catalyses hydrogencarbonate + L-glutamine + 2 ATP + H2O = carbamoyl phosphate + L-glutamate + 2 ADP + phosphate + 2 H(+). The catalysed reaction is hydrogencarbonate + NH4(+) + 2 ATP = carbamoyl phosphate + 2 ADP + phosphate + 2 H(+). It functions in the pathway amino-acid biosynthesis; L-arginine biosynthesis; carbamoyl phosphate from bicarbonate: step 1/1. It participates in pyrimidine metabolism; UMP biosynthesis via de novo pathway; (S)-dihydroorotate from bicarbonate: step 1/3. In terms of biological role, large subunit of the glutamine-dependent carbamoyl phosphate synthetase (CPSase). CPSase catalyzes the formation of carbamoyl phosphate from the ammonia moiety of glutamine, carbonate, and phosphate donated by ATP, constituting the first step of 2 biosynthetic pathways, one leading to arginine and/or urea and the other to pyrimidine nucleotides. The large subunit (synthetase) binds the substrates ammonia (free or transferred from glutamine from the small subunit), hydrogencarbonate and ATP and carries out an ATP-coupled ligase reaction, activating hydrogencarbonate by forming carboxy phosphate which reacts with ammonia to form carbamoyl phosphate. This Kocuria rhizophila (strain ATCC 9341 / DSM 348 / NBRC 103217 / DC2201) protein is Carbamoyl phosphate synthase large chain.